Reading from the N-terminus, the 183-residue chain is Orotate phosphoribosyltransferase (183 aa).

5-phospho-alpha-D-ribose 1-diphosphate contacts are provided by residues arginine 100, lysine 101, lysine 104, histidine 106, and 126 to 134 (EDVVTTGSS). Residues threonine 130 and arginine 158 each contribute to the orotate site.

Belongs to the purine/pyrimidine phosphoribosyltransferase family. PyrE subfamily. Homodimer. Requires Mg(2+) as cofactor.

The enzyme catalyses orotidine 5'-phosphate + diphosphate = orotate + 5-phospho-alpha-D-ribose 1-diphosphate. It participates in pyrimidine metabolism; UMP biosynthesis via de novo pathway; UMP from orotate: step 1/2. In terms of biological role, catalyzes the transfer of a ribosyl phosphate group from 5-phosphoribose 1-diphosphate to orotate, leading to the formation of orotidine monophosphate (OMP). The chain is Orotate phosphoribosyltransferase from Aquifex aeolicus (strain VF5).